A 429-amino-acid chain; its full sequence is Histidine--tRNA ligase (429 aa).

Belongs to the class-II aminoacyl-tRNA synthetase family. In terms of assembly, homodimer.

It is found in the cytoplasm. The catalysed reaction is tRNA(His) + L-histidine + ATP = L-histidyl-tRNA(His) + AMP + diphosphate + H(+). The protein is Histidine--tRNA ligase of Pseudomonas aeruginosa (strain LESB58).